The chain runs to 151 residues: Transcriptional regulator MraZ (151 aa).

SpoVT-AbrB domains are found at residues 5–52 (IHQV…PLSE) and 81–124 (ATDL…SQEE).

It belongs to the MraZ family. Forms oligomers.

Its subcellular location is the cytoplasm. The protein localises to the nucleoid. In Marinomonas sp. (strain MWYL1), this protein is Transcriptional regulator MraZ.